We begin with the raw amino-acid sequence, 439 residues long: Synaptotagmin-B (439 aa).

Residues 1 to 74 (MQAEMNQSAE…KEKFMNELQK (74 aa)) lie on the Vesicular side of the membrane. 2 N-linked (GlcNAc...) asparagine glycosylation sites follow: Asn-6 and Asn-46. Residues 75-101 (IPLPPWALIAIAIVSGLLLLTCCLCIC) form a helical membrane-spanning segment. Over 102 to 439 (KKCCCKKKKN…EVDVALGLKK (338 aa)) the chain is Cytoplasmic. A disordered region spans residues 113–155 (KEKGKGKKNDINMKDVKGSGGNQDDDDAETGLTEGEDKEEEAK). The span at 119–129 (KKNDINMKDVK) shows a compositional bias: basic and acidic residues. Residues 135 to 151 (QDDDDAETGLTEGEDKE) show a composition bias toward acidic residues. The tract at residues 153 to 399 (EAKEEEKLGK…AIGKIFVGSN (247 aa)) is phospholipid binding. C2 domains lie at 159–278 (KLGK…EEWR) and 290–423 (KLGD…AQWH). Ca(2+) is bound by residues Leu-189, Asp-190, Asp-196, Asp-248, Phe-249, Asp-250, Ser-253, Lys-254, Asp-256, Asp-321, Asp-327, Asp-381, Asp-383, and Asp-389.

The protein belongs to the synaptotagmin family. As to quaternary structure, homodimer or homotrimer (possible). It depends on Ca(2+) as a cofactor. Spinal cord, brainstem, midbrain and electric organ.

It is found in the cytoplasmic vesicle. The protein localises to the secretory vesicle. The protein resides in the synaptic vesicle membrane. Its subcellular location is the synapse. Functionally, may have a regulatory role in the membrane interactions during trafficking of synaptic vesicles at the active zone of the synapse. It binds acidic phospholipids with a specificity that requires the presence of both an acidic head group and a diacyl backbone. This Diplobatis ommata (Ocellated electric ray) protein is Synaptotagmin-B (P65-B).